Here is a 314-residue protein sequence, read N- to C-terminus: uncharacterized protein (314 aa).

This is an uncharacterized protein from Acanthamoeba polyphaga mimivirus (APMV).